The primary structure comprises 811 residues: MPLSSPNAAATASDMDKNSGSNSSSASSGSSKGQQPPRSASAGPAGESKPKSDGKNSSGSKRYNRKRELSYPKNESFNNQSRRSSSQKSKTFNKMPPQRGGGSSKLFSSSFNGGRRDEVAEAQRAEFSPAQFSGPKKINLNHLLNFTFEPRGQTGHFEGSGHGSWGKRNKWGHKPFNKELFLQANCQFVVSEDQDYTAHFADPDTLVNWDFVEQVRICSHEVPSCPICLYPPTAAKITRCGHIFCWACILHYLSLSEKTWSKCPICYSSVHKKDLKSVVATESHQYVVGDTITMQLMKREKGVLVALPKSKWMNVDHPIHLGDEQHSQYSKLLLASKEQVLHRVVLEEKVALEQQLAEEKHTPESCFIEAAIQELKTREEALSGLAGSRREVTGVVAALEQLVLMAPLAKESVFQPRKGVLEYLSAFDEETTEVCSLDTPSRPLALPLVEEEEAVSEPEPEGLPEACDDLELADDNLKEGTICTESSQQEPITKSGFTRLSSSPCYYFYQAEDGQHMFLHPVNVRCLVREYGSLERSPEKISATVVEIAGYSMSEDVRQRHRYLSHLPLTCEFSICELALQPPVVSKETLEMFSDDIEKRKRQRQKKAREERRRERRIEIEENKKQGKYPEVHIPLENLQQFPAFNSYTCSSDSALGPTSTEGHGALSISPLSRSPGSHADFLLTPLSPTASQGSPSFCVGSLEEDSPFPSFAQMLRVGKAKADVWPKTAPKKDENSLVPPAPVDSDGESDNSDRVPVPSFQNSFSQAIEAAFMKLDTPATSDPLSEEKGGKKRKKQKQKLLFSTSVVHTK.

A compositionally biased stretch (polar residues) spans 1–10; the sequence is MPLSSPNAAA. The segment at 1–119 is disordered; that stretch reads MPLSSPNAAA…SFNGGRRDEV (119 aa). The residue at position 5 (serine 5) is a Phosphoserine. Low complexity-rich tracts occupy residues 18–31, 78–90, and 104–113; these read NSGS…SGSS, NNQS…QKSK, and SKLFSSSFNG. The tract at residues 101 to 185 is interaction with MEOX2; it reads GGSSKLFSSS…FNKELFLQAN (85 aa). Phosphoserine occurs at positions 110 and 128. Residues 225-267 form an RING-type zinc finger; sequence CPICLYPPTAAKITRCGHIFCWACILHYLSLSEKTWSKCPICY. Positions 653 to 662 are enriched in polar residues; the sequence is DSALGPTSTE. Disordered regions lie at residues 653–672, 724–761, and 776–811; these read DSAL…ISPL, DVWP…VPSF, and LDTP…VHTK. Residues 724–736 show a composition bias toward basic and acidic residues; sequence DVWPKTAPKKDEN. A compositionally biased stretch (polar residues) spans 802–811; that stretch reads LFSTSVVHTK.

The protein belongs to the RNF10 family. Interacts with MEOX2.

The protein localises to the cytoplasm. The protein resides in the nucleus. It carries out the reaction S-ubiquitinyl-[E2 ubiquitin-conjugating enzyme]-L-cysteine + [acceptor protein]-L-lysine = [E2 ubiquitin-conjugating enzyme]-L-cysteine + N(6)-ubiquitinyl-[acceptor protein]-L-lysine.. It functions in the pathway protein modification; protein ubiquitination. Its function is as follows. E3 ubiquitin-protein ligase that catalyzes monoubiquitination of 40S ribosomal proteins RPS2/us5 and RPS3/us3 in response to ribosome stalling. Part of a ribosome quality control that takes place when ribosomes have stalled during translation initiation (iRQC): RNF10 acts by mediating monoubiquitination of RPS2/us5 and RPS3/us3, promoting their degradation by the proteasome. Also promotes ubiquitination of 40S ribosomal proteins in response to ribosome stalling during translation elongation. The action of RNF10 in iRQC is counteracted by USP10. May also act as a transcriptional factor involved in the regulation of MAG (Myelin-associated glycoprotein) expression. Acts as a regulator of Schwann cell differentiation and myelination. The polypeptide is E3 ubiquitin-protein ligase RNF10 (Homo sapiens (Human)).